We begin with the raw amino-acid sequence, 148 residues long: Calmodulin (148 aa).

The residue at position 2 (alanine 2) is an N-acetylalanine. EF-hand domains are found at residues 8-43 (DQIS…LGQN), 44-79 (PTEA…KMKD), 81-116 (DSEE…LGEK), and 116-148 (KLTD…MMAK). Ca(2+)-binding residues include aspartate 21, aspartate 23, aspartate 25, cysteine 27, glutamate 32, aspartate 57, aspartate 59, asparagine 61, threonine 63, glutamate 68, aspartate 94, aspartate 96, asparagine 98, and glutamate 105. Lysine 116 carries the post-translational modification N6,N6,N6-trimethyllysine. Ca(2+)-binding residues include aspartate 129, aspartate 131, aspartate 133, glutamine 135, and glutamate 140.

This sequence belongs to the calmodulin family.

In terms of biological role, calmodulin mediates the control of a large number of enzymes, ion channels and other proteins by Ca(2+). Among the enzymes to be stimulated by the calmodulin-Ca(2+) complex are a number of protein kinases and phosphatases. The chain is Calmodulin (CAMF1) from Fagus sylvatica (Beechnut).